The chain runs to 503 residues: ATP synthase subunit alpha (503 aa).

Residue G170–T177 coordinates ATP.

Belongs to the ATPase alpha/beta chains family. In terms of assembly, F-type ATPases have 2 components, CF(1) - the catalytic core - and CF(0) - the membrane proton channel. CF(1) has five subunits: alpha(3), beta(3), gamma(1), delta(1), epsilon(1). CF(0) has three main subunits: a(1), b(2) and c(9-12). The alpha and beta chains form an alternating ring which encloses part of the gamma chain. CF(1) is attached to CF(0) by a central stalk formed by the gamma and epsilon chains, while a peripheral stalk is formed by the delta and b chains.

It is found in the cell inner membrane. The catalysed reaction is ATP + H2O + 4 H(+)(in) = ADP + phosphate + 5 H(+)(out). Its function is as follows. Produces ATP from ADP in the presence of a proton gradient across the membrane. The alpha chain is a regulatory subunit. This Thermotoga neapolitana (strain ATCC 49049 / DSM 4359 / NBRC 107923 / NS-E) protein is ATP synthase subunit alpha.